Consider the following 282-residue polypeptide: Putative SLC9B1-like protein SLC9B1P1 (282 aa).

The next 7 helical transmembrane spans lie at 27–47 (LLAITGFNTCLSIVFYSGGMI), 51–71 (IASLRNVCISLLAGIVLGFFV), 87–107 (GFLVLITFVSAVLGSQPIGLH), 135–155 (IITNVWDIFQPLLFGLVGAEV), 174–194 (LALCVRILNIYLLMCFAGFSF), 198–218 (IFIALAWMPKATVQAVLGPLA), and 239–259 (VAFLAIMITAPNGALLMGILG).

Belongs to the monovalent cation:proton antiporter 1 (CPA1) transporter (TC 2.A.36) family.

It is found in the membrane. This chain is Putative SLC9B1-like protein SLC9B1P1 (SLC9B1P1), found in Homo sapiens (Human).